The sequence spans 365 residues: MGKIDFRLEKTFGYTTGACAAAGAFSALYFLKNNEKLRFVEILNLKGDSLIIPIKNIEKQKNTAISTVEKFSGEDIDITNGMDIKIEVTLEKLDNNSSKSSSVKIIGGDGVGIVTKSGLQVNPGEYAINPKPREMIENNLKSLLENDECVTAKISVPNGDEIAKKTLNPKLGIIGGISILGTTGIVRPMSNDAYKESLAPQIDVALAYNFENLIFVPGNIGTKHAKILLNAKEDQIIEVSNFWDYMLDKAKEKGVKDITVFGHAGKIVKLAGGIFDTHSRVADARNEILCAYTSLITQDVEMLQKILQSNTTEDIVEILTEKGILTEVFEKVSKRVVERLSLRWEKINFSCIIIDMKGNILGKSD.

It belongs to the CbiD family.

The enzyme catalyses Co-precorrin-5B + S-adenosyl-L-methionine = Co-precorrin-6A + S-adenosyl-L-homocysteine. It participates in cofactor biosynthesis; adenosylcobalamin biosynthesis; cob(II)yrinate a,c-diamide from sirohydrochlorin (anaerobic route): step 6/10. Catalyzes the methylation of C-1 in cobalt-precorrin-5B to form cobalt-precorrin-6A. This is Cobalt-precorrin-5B C(1)-methyltransferase from Methanococcus maripaludis (strain DSM 14266 / JCM 13030 / NBRC 101832 / S2 / LL).